Here is a 339-residue protein sequence, read N- to C-terminus: DNA-directed RNA polymerase subunit alpha (339 aa).

The alpha N-terminal domain (alpha-NTD) stretch occupies residues 1–233 (MVREKVRIST…DLFIPFLHAE (233 aa)). Residues 267–339 (IALKSIFIDQ…FTINLPKNKF (73 aa)) are alpha C-terminal domain (alpha-CTD).

The protein belongs to the RNA polymerase alpha chain family. In terms of assembly, in plastids the minimal PEP RNA polymerase catalytic core is composed of four subunits: alpha, beta, beta', and beta''. When a (nuclear-encoded) sigma factor is associated with the core the holoenzyme is formed, which can initiate transcription.

It is found in the plastid. The protein resides in the chloroplast. It catalyses the reaction RNA(n) + a ribonucleoside 5'-triphosphate = RNA(n+1) + diphosphate. Its function is as follows. DNA-dependent RNA polymerase catalyzes the transcription of DNA into RNA using the four ribonucleoside triphosphates as substrates. This is DNA-directed RNA polymerase subunit alpha from Populus alba (White poplar).